We begin with the raw amino-acid sequence, 247 residues long: MNEKIAILSAYSFVNIEEPANLIPKLLLLGKRKYIRGTILLANEGFNGSFSGSYENVNLVLEELIKLTGPKDVNVKINYSDVHPFQKLKVRLKKEIIAMNVDDLNVDLFKGEYIEPKDWDEFITKQDVIVIDTRNDYEVEVGTFKSAINPNTKTFKQFPAWVQQNQELLKGKKIAMVCTGGIRCEKSTSLLKSIGYNEVYHLKGGILQYLEDTQNKNNLWQGECFVFDDRRAVTDDLSPVERHWLQR.

A Rhodanese domain is found at 124 to 218 (TKQDVIVIDT…YLEDTQNKNN (95 aa)). The Cysteine persulfide intermediate role is filled by Cys178.

It belongs to the TrhO family.

It carries out the reaction uridine(34) in tRNA + AH2 + O2 = 5-hydroxyuridine(34) in tRNA + A + H2O. Catalyzes oxygen-dependent 5-hydroxyuridine (ho5U) modification at position 34 in tRNAs. The sequence is that of tRNA uridine(34) hydroxylase from Rickettsia rickettsii (strain Iowa).